We begin with the raw amino-acid sequence, 911 residues long: Valine--tRNA ligase (911 aa).

The 'HIGH' region motif lies at 57–67 (PTVSGSLHVGH). The 'KMSKS' region signature appears at 599–603 (KMSKS). Lysine 602 provides a ligand contact to ATP. The segment at 882-911 (EESAAEGTPETEVAVEASELGEPPAKKPKH) is disordered.

This sequence belongs to the class-I aminoacyl-tRNA synthetase family. ValS type 2 subfamily. Monomer.

It localises to the cytoplasm. It catalyses the reaction tRNA(Val) + L-valine + ATP = L-valyl-tRNA(Val) + AMP + diphosphate. Functionally, catalyzes the attachment of valine to tRNA(Val). As ValRS can inadvertently accommodate and process structurally similar amino acids such as threonine, to avoid such errors, it has a 'posttransfer' editing activity that hydrolyzes mischarged Thr-tRNA(Val) in a tRNA-dependent manner. The protein is Valine--tRNA ligase of Bifidobacterium longum (strain NCC 2705).